We begin with the raw amino-acid sequence, 292 residues long: Mitochondrial ornithine transporter 1 (292 aa).

Solcar repeat units follow at residues 11 to 97 (EGAI…CSKF), 105 to 196 (SPLG…VKKS), and 211 to 292 (SKIW…LSAL). Helical transmembrane passes span 14–34 (ILDIINGSIAGACGKVIEFPF), 69–89 (FFQGIASPLVGACLENATLFV), 104–124 (VSPLGQILISGGVAGSCASLV), 171–187 (GQSGTFIRESFGGVAWF), 213–233 (IWELLISGGSAGLAFNASIFP), and 267–287 (GLGITLFRAVPANAAVFYIFE).

Belongs to the mitochondrial carrier (TC 2.A.29) family.

Its subcellular location is the mitochondrion inner membrane. Required for arginine biosynthesis. Transports ornithine synthesized from glutamate in the mitochondrial matrix to the cytosol, where it is converted to arginine. This is Mitochondrial ornithine transporter 1 (ORT1) from Saccharomyces cerevisiae (strain ATCC 204508 / S288c) (Baker's yeast).